We begin with the raw amino-acid sequence, 153 residues long: Histone H2B.8 (153 aa).

Composition is skewed to basic and acidic residues over residues 1 to 28 (MAPK…EKAP) and 36 to 53 (EKRL…EGKK). The disordered stretch occupies residues 1–61 (MAPKAEKKPA…KKAGRKKAKK (61 aa)). Residues Lys7 and Lys37 each carry the N6-acetyllysine modification. A Glycyl lysine isopeptide (Lys-Gly) (interchain with G-Cter in ubiquitin) cross-link involves residue Lys149.

This sequence belongs to the histone H2B family. The nucleosome is a histone octamer containing two molecules each of H2A, H2B, H3 and H4 assembled in one H3-H4 heterotetramer and two H2A-H2B heterodimers. The octamer wraps approximately 147 bp of DNA. Post-translationally, can be acetylated to form H2BK6ac and H2BK33ac. Monoubiquitinated by BRE1 to form H2BK143ub1 and deubiquitinated by UBP26. Required for heterochromatic histone H3 di- and trimethylation at H3K4me. May give a specific tag for epigenetic transcriptional activation.

It is found in the nucleus. The protein resides in the chromosome. Core component of nucleosome. Nucleosomes wrap and compact DNA into chromatin, limiting DNA accessibility to the cellular machineries which require DNA as a template. Histones thereby play a central role in transcription regulation, DNA repair, DNA replication and chromosomal stability. DNA accessibility is regulated via a complex set of post-translational modifications of histones, also called histone code, and nucleosome remodeling. This is Histone H2B.8 (H2B.8) from Oryza sativa subsp. indica (Rice).